A 76-amino-acid polypeptide reads, in one-letter code: Omega-conotoxin-like TxMKLT1-0141 (76 aa).

Positions 1–22 are cleaved as a signal peptide; the sequence is MKLTCMMIVAVLFLTAWTFATA. Residues 23 to 50 constitute a propeptide that is removed on maturation; that stretch reads DDSSNGLENLFPKAHHEMKNPEASKLNE. Intrachain disulfides connect Cys52–Cys67, Cys59–Cys70, and Cys66–Cys75.

This sequence belongs to the conotoxin O1 superfamily. As to expression, expressed by the venom duct.

It localises to the secreted. In terms of biological role, omega-conotoxins act at presynaptic membranes, they bind and block voltage-gated calcium channels (Cav). This chain is Omega-conotoxin-like TxMKLT1-0141, found in Conus textile (Cloth-of-gold cone).